An 84-amino-acid polypeptide reads, in one-letter code: Small ribosomal subunit protein uS17 (84 aa).

The protein belongs to the universal ribosomal protein uS17 family. As to quaternary structure, part of the 30S ribosomal subunit.

In terms of biological role, one of the primary rRNA binding proteins, it binds specifically to the 5'-end of 16S ribosomal RNA. The chain is Small ribosomal subunit protein uS17 from Moorella thermoacetica (strain ATCC 39073 / JCM 9320).